Consider the following 677-residue polypeptide: Fermitin family homolog 1 (677 aa).

The FERM domain occupies 96-653 (MLRLRLPNLK…HEYIGGYIFL (558 aa)). Phosphoserine is present on residues Ser170, Ser179, and Ser361. The PH domain occupies 377–473 (KLFRPKKLLP…WMAACMLASK (97 aa)).

This sequence belongs to the kindlin family. Interacts with the cytoplasmic domain of integrins ITGB1 and ITGB3. In terms of tissue distribution, expressed in brain, skeletal muscle, kidney, colon, adrenal gland, prostate, and placenta. Weakly or not expressed in heart, thymus, spleen, liver, small intestine, bone marrow, lung and peripheral blood leukocytes. Overexpressed in some colon and lung tumors. In skin, it is localized within the epidermis and particularly in basal keratocytes. Not detected in epidermal melanocytes and dermal fibroblasts.

The protein localises to the cytoplasm. It is found in the cytoskeleton. Its subcellular location is the cell junction. It localises to the focal adhesion. The protein resides in the cell projection. The protein localises to the ruffle membrane. In terms of biological role, involved in cell adhesion. Contributes to integrin activation. When coexpressed with talin, potentiates activation of ITGA2B. Required for normal keratinocyte proliferation. Required for normal polarization of basal keratinocytes in skin, and for normal cell shape. Required for normal adhesion of keratinocytes to fibronectin and laminin, and for normal keratinocyte migration to wound sites. May mediate TGF-beta 1 signaling in tumor progression. This is Fermitin family homolog 1 (FERMT1) from Homo sapiens (Human).